A 48-amino-acid chain; its full sequence is Toxin CSTX-15 (48 aa).

4 disulfides stabilise this stretch: Cys3–Cys18, Cys10–Cys27, Cys17–Cys42, and Cys29–Cys40.

This sequence belongs to the neurotoxin 19 (CSTX) family. 12 subfamily. In terms of assembly, heterodimer of A and B chains; disulfide-linked. Contains 4 disulfide bonds. In terms of tissue distribution, expressed by the venom gland.

The protein localises to the secreted. This is Toxin CSTX-15 from Cupiennius salei (American wandering spider).